A 987-amino-acid chain; its full sequence is Ephrin type-B receptor 4 (987 aa).

Positions 1–15 are cleaved as a signal peptide; the sequence is MELRALLCWASLATA. Over 16–539 the chain is Extracellular; sequence LEETLLNTKL…ESESWREQLA (524 aa). Residues 17–202 enclose the Eph LBD domain; that stretch reads EETLLNTKLE…FYKKCSWLIT (186 aa). Intrachain disulfides connect Cys-61/Cys-184 and Cys-97/Cys-107. 3 N-linked (GlcNAc...) asparagine glycosylation sites follow: Asn-203, Asn-335, and Asn-426. Fibronectin type-III domains are found at residues 323–432 and 436–529; these read PPSA…TDRE and AVSD…TQLD. A helical membrane pass occupies residues 540-560; it reads LIAGTAVVGVVLVLVVVIIAV. Over 561–987 the chain is Cytoplasmic; that stretch reads LCLRKQSNGR…GGTGGPAQQF (427 aa). In terms of domain architecture, Protein kinase spans 615-899; sequence VKIEEVIGAG…ENGGASHPLL (285 aa). Residues 621-629 and Lys-647 each bind ATP; that span reads IGAGEFGEV. The Proton acceptor role is filled by Asp-740. Ser-769, Ser-770, Ser-911, and Ser-943 each carry phosphoserine. An SAM domain is found at 907–971; sequence SAFGSVGEWL…LASVQHMKSQ (65 aa). Residues 965–987 are disordered; the sequence is VQHMKSQAKPGAPGGTGGPAQQF. Over residues 976–987 the composition is skewed to gly residues; that stretch reads APGGTGGPAQQF. The short motif at 985-987 is the PDZ-binding element; sequence QQF.

This sequence belongs to the protein kinase superfamily. Tyr protein kinase family. Ephrin receptor subfamily. As to quaternary structure, heterotetramer upon binding of the ligand. The heterotetramer is composed of an ephrin dimer and a receptor dimer. Oligomerization is probably required to induce biological responses. Interacts with RASA1; the interaction depends on EPHB4 tyrosine-phosphorylation. In terms of processing, phosphorylated; autophosphorylation is stimulated by EFNB2. Expressed in various organ systems, including lung, liver, kidney, intestine, muscle and heart. Expressed in myogenic progenitor cells.

The protein localises to the cell membrane. It catalyses the reaction L-tyrosyl-[protein] + ATP = O-phospho-L-tyrosyl-[protein] + ADP + H(+). Its function is as follows. Receptor tyrosine kinase which binds promiscuously transmembrane ephrin-B family ligands residing on adjacent cells, leading to contact-dependent bidirectional signaling into neighboring cells. The signaling pathway downstream of the receptor is referred to as forward signaling while the signaling pathway downstream of the ephrin ligand is referred to as reverse signaling. Together with its cognate ligand/functional ligand EFNB2 it is involved in the regulation of cell adhesion and migration, and plays a central role in heart morphogenesis, angiogenesis and blood vessel remodeling and permeability. EPHB4-mediated forward signaling controls cellular repulsion and segregation from EFNB2-expressing cells. This chain is Ephrin type-B receptor 4 (Ephb4), found in Mus musculus (Mouse).